The following is a 130-amino-acid chain: Small ribosomal subunit protein bS16 (130 aa).

Positions 82–130 are disordered; the sequence is VLPKTERNNPKKAVPGKKAQDRAEEKAAKAAEASEAPADEAPAEEAAAE. A compositionally biased stretch (basic and acidic residues) spans 99-110; that stretch reads KAQDRAEEKAAK. The span at 118–130 shows a compositional bias: acidic residues; it reads PADEAPAEEAAAE.

The protein belongs to the bacterial ribosomal protein bS16 family.

This chain is Small ribosomal subunit protein bS16, found in Dinoroseobacter shibae (strain DSM 16493 / NCIMB 14021 / DFL 12).